The chain runs to 463 residues: Glutamate--tRNA ligase 1 (463 aa).

The 'HIGH' region motif lies at Pro-10–Gly-20. Positions Lys-238–Arg-242 match the 'KMSKS' region motif. Lys-241 lines the ATP pocket.

Belongs to the class-I aminoacyl-tRNA synthetase family. Glutamate--tRNA ligase type 1 subfamily. Monomer.

Its subcellular location is the cytoplasm. The catalysed reaction is tRNA(Glu) + L-glutamate + ATP = L-glutamyl-tRNA(Glu) + AMP + diphosphate. In terms of biological role, catalyzes the attachment of glutamate to tRNA(Glu) in a two-step reaction: glutamate is first activated by ATP to form Glu-AMP and then transferred to the acceptor end of tRNA(Glu). The sequence is that of Glutamate--tRNA ligase 1 from Helicobacter pylori (strain G27).